A 312-amino-acid polypeptide reads, in one-letter code: Non-structural protein 12A (312 aa).

Residues 1–23 (MFKSGSGSLKRSGSISSVKSFSG) are compositionally biased toward low complexity. 3 disordered regions span residues 1 to 37 (MFKS…RGSV), 63 to 97 (VPEK…YNQN), and 114 to 162 (KGRG…TGDG). The span at 63–73 (VPEKTKSEGNL) shows a compositional bias: basic and acidic residues. The span at 74 to 97 (KNKSSVITGNFESSGPTNAHYNQN) shows a compositional bias: polar residues. Over residues 122 to 134 (DARHTATDSRLSQ) the composition is skewed to basic and acidic residues.

It belongs to the phytoreovirus non-structural protein Pns12A family.

It localises to the host cytoplasm. Constituent of viral factories. The sequence is that of Non-structural protein 12A from Rice dwarf virus (isolate Fujian) (RDV).